A 248-amino-acid polypeptide reads, in one-letter code: MENFKGLQKSLYIWTDSADLDKRVEQLKAATGGDVALENVHRLSFSSYANSSFDLIVIECAQLTDSYVKLLHMLKPSGKLHLVSFIGPAASLLQEIKLSGFINCREDSPDALSAEKPGYETGSSARLSFAKKNANAANVWKISGDDEELIDEEELLDEEDKQKPDPAGLRVCSTTGKRKACKNCSCGLAEELETEKQSQKATENAKSSCGNCYLGDAFRCSTCPYLGMPAFKPGEKVQLADNLLKSDI.

Residues Phe4–Phe129 form an N-terminal SAM-like domain region. Residues Ala130–Lys161 are linker. [2Fe-2S] cluster contacts are provided by Cys172, Cys181, Cys184, and Cys186. Positions Cys172–Cys186 are fe-S binding site A. Positions 209, 212, 220, and 223 each coordinate [4Fe-4S] cluster. 2 consecutive short sequence motifs (cx2C motif) follow at residues Cys209 to Cys212 and Cys220 to Cys223. Residues Cys209 to Cys223 form a fe-S binding site B region.

This sequence belongs to the anamorsin family. In terms of assembly, monomer. [2Fe-2S] cluster serves as cofactor. [4Fe-4S] cluster is required as a cofactor.

It localises to the cytoplasm. Its subcellular location is the mitochondrion intermembrane space. Its function is as follows. Component of the cytosolic iron-sulfur (Fe-S) protein assembly (CIA) machinery. Required for the maturation of extramitochondrial Fe-S proteins. Part of an electron transfer chain functioning in an early step of cytosolic Fe-S biogenesis, facilitating the de novo assembly of a [4Fe-4S] cluster on the cytosolic Fe-S scaffold complex. Electrons are transferred from NADPH via a FAD- and FMN-containing diflavin oxidoreductase. Together with the diflavin oxidoreductase, also required for the assembly of the diferric tyrosyl radical cofactor of ribonucleotide reductase (RNR), probably by providing electrons for reduction during radical cofactor maturation in the catalytic small subunit. The sequence is that of Anamorsin homolog from Drosophila sechellia (Fruit fly).